The primary structure comprises 191 residues: Large ribosomal subunit protein bL9 (191 aa).

The segment at 149-191 (EEAERQSKGESLTSADAIYGVDEDALRPEDFFDPEADGNEDDE) is disordered. Positions 179 to 191 (FFDPEADGNEDDE) are enriched in acidic residues.

The protein belongs to the bacterial ribosomal protein bL9 family.

Functionally, binds to the 23S rRNA. In Agrobacterium fabrum (strain C58 / ATCC 33970) (Agrobacterium tumefaciens (strain C58)), this protein is Large ribosomal subunit protein bL9 (rplI).